A 2225-amino-acid polypeptide reads, in one-letter code: Multifunctional protein CAD (2225 aa).

A2 is modified (N-acetylalanine). Positions 2–365 are GATase (Glutamine amidotransferase); it reads AALVLEDGSV…TVREAAAGNI (364 aa). L-glutamine contacts are provided by S44, G222, and G224. The Glutamine amidotransferase type-1 domain maps to 177–363; sequence RICALDCGLK…LETVREAAAG (187 aa). Catalysis depends on C252, which acts as the Nucleophile; for GATase activity. Residues L253, Q256, N294, G296, and F297 each coordinate L-glutamine. Active-site for GATase activity residues include H336 and E338. The segment at 366-394 is linker; it reads GGQTVRERLAQRLCPPELPIPGSGLPPPR. The CPSase A stretch occupies residues 395–933; the sequence is KVLILGSGGL…NTHDLDFRAP (539 aa). Residues 395–1455 are CPSase (Carbamoyl-phosphate synthase); the sequence is KVLILGSGGL…APPLKVHVDC (1061 aa). A Phosphothreonine; by MAPK1 modification is found at T456. Residues R515, R555, G561, G562, K592, E599, G625, I626, H627, Q668, and E682 each coordinate ATP. The 193-residue stretch at 519 to 711 folds into the ATP-grasp 1 domain; it reads AARMAEIGEH…LAYVAAKLAL (193 aa). The Mg(2+) site is built by Q668, E682, and N684. Residues Q668, E682, and N684 each coordinate Mn(2+). N6-acetyllysine is present on K747. The interval 934–1455 is CPSase B; the sequence is HVLVLGSGVY…APPLKVHVDC (522 aa). S1038 bears the Phosphoserine mark. Positions 1052–1243 constitute an ATP-grasp 2 domain; the sequence is SRLLDTIGIS…LVALATRIIM (192 aa). 10 residues coordinate ATP: R1088, K1127, I1129, E1134, G1159, V1160, H1161, S1162, Q1202, and E1214. Mg(2+) contacts are provided by Q1202, E1214, and N1216. Q1202, E1214, and N1216 together coordinate Mn(2+). The MGS-like domain maps to 1308-1462; sequence FKIPEKNILL…VDCMTSQKLV (155 aa). Phosphoserine; by PKA is present on S1406. K1411 carries the post-translational modification N6-acetyllysine. A DHOase (dihydroorotase) region spans residues 1456 to 1788; that stretch reads MTSQKLVRLP…VKGTVRRVVL (333 aa). Zn(2+)-binding residues include H1471 and H1473. Residues R1475 and N1505 each contribute to the (S)-dihydroorotate site. The Zn(2+) site is built by K1556, H1590, C1613, H1614, and E1637. N6-carboxylysine is present on K1556. Residue R1661 coordinates (S)-dihydroorotate. Position 1686 (D1686) interacts with Zn(2+). Catalysis depends on D1686, which acts as the For DHOase activity. (S)-dihydroorotate-binding residues include H1690 and P1702. Residues 1789–1917 are linker; sequence RGEVAYIDGQ…GLLHPQMSPL (129 aa). Positions 1815–1885 are disordered; that stretch reads GVVPQPPPST…VVEPELMGTP (71 aa). Residues 1825 to 1834 are compositionally biased toward low complexity; sequence PATTEITTTP. At S1859 the chain carries Phosphoserine. Positions 1866-1878 are enriched in basic and acidic residues; that stretch reads EEPKEKPPRKVVE. Residue T1884 is modified to Phosphothreonine. S1900 and S1938 each carry phosphoserine. The segment at 1918–2225 is ATCase (Aspartate transcarbamylase); it reads LHSLVGQHIL…ALLATVLGRF (308 aa). Positions 1975 and 1976 each coordinate carbamoyl phosphate. Residue K2003 coordinates L-aspartate. R2024, H2052, and Q2055 together coordinate carbamoyl phosphate. Residues R2085 and R2146 each coordinate L-aspartate. 2 residues coordinate carbamoyl phosphate: M2185 and P2186.

This sequence in the N-terminal section; belongs to the CarA family. It in the 2nd section; belongs to the CarB family. In the 3rd section; belongs to the metallo-dependent hydrolases superfamily. DHOase family. CAD subfamily. The protein in the C-terminal section; belongs to the aspartate/ornithine carbamoyltransferase superfamily. ATCase family. Homohexamer. Interacts with CIPC. The cofactor is Zn(2+). Requires Mg(2+) as cofactor. It depends on Mn(2+) as a cofactor. Post-translationally, activated by MAP kinase (Erk1/2) phosphorylation just prior to the S phase of the cell cycle, when the demand for pyrimidine nucleotides is greatest, and down-regulated as the cells emerge from S phase by protein kinase A (PKA) phosphorylation. Phosphorylation at Ser-1859 by RPS6KB1 downstream of MTOR promotes oligomerization and stimulates dihydroorotase activity. Phosphorylation at Ser-1406 reduces sensitivity to feedback inhibition by UTP.

Its subcellular location is the cytoplasm. The protein resides in the nucleus. It catalyses the reaction hydrogencarbonate + L-glutamine + 2 ATP + H2O = carbamoyl phosphate + L-glutamate + 2 ADP + phosphate + 2 H(+). The catalysed reaction is L-glutamine + H2O = L-glutamate + NH4(+). The enzyme catalyses hydrogencarbonate + NH4(+) + 2 ATP = carbamoyl phosphate + 2 ADP + phosphate + 2 H(+). It carries out the reaction carbamoyl phosphate + L-aspartate = N-carbamoyl-L-aspartate + phosphate + H(+). It catalyses the reaction (S)-dihydroorotate + H2O = N-carbamoyl-L-aspartate + H(+). It participates in pyrimidine metabolism; UMP biosynthesis via de novo pathway; (S)-dihydroorotate from bicarbonate: step 1/3. The protein operates within pyrimidine metabolism; UMP biosynthesis via de novo pathway; (S)-dihydroorotate from bicarbonate: step 2/3. Its pathway is pyrimidine metabolism; UMP biosynthesis via de novo pathway; (S)-dihydroorotate from bicarbonate: step 3/3. With respect to regulation, allosterically regulated and controlled by phosphorylation. 5-phosphoribose 1-diphosphate (PRPP) is an activator while UMP and UTP are inhibitors of the CPSase reaction. Its function is as follows. Multifunctional protein that encodes the first 3 enzymatic activities of the de novo pyrimidine pathway: carbamoylphosphate synthetase (CPSase; EC 6.3.5.5), aspartate transcarbamylase (ATCase; EC 2.1.3.2) and dihydroorotase (DHOase; EC 3.5.2.3). The CPSase-function is accomplished in 2 steps, by a glutamine-dependent amidotransferase activity (GATase) that binds and cleaves glutamine to produce ammonia, followed by an ammonium-dependent carbamoyl phosphate synthetase, which reacts with the ammonia, hydrogencarbonate and ATP to form carbamoyl phosphate. The endogenously produced carbamoyl phosphate is sequestered and channeled to the ATCase active site. ATCase then catalyzes the formation of carbamoyl-L-aspartate from L-aspartate and carbamoyl phosphate. In the last step, DHOase catalyzes the cyclization of carbamoyl aspartate to dihydroorotate. This chain is Multifunctional protein CAD (Cad), found in Mus musculus (Mouse).